We begin with the raw amino-acid sequence, 340 residues long: uncharacterized protein (340 aa).

Residues 193 to 207 (KELPKEKKKSDGDKT) show a composition bias toward basic and acidic residues. Residues 193 to 340 (KELPKEKKKS…FIPLQPKKKI (148 aa)) form a disordered region. Low complexity predominate over residues 217–228 (FFGFWGHSGSKS). Residues 235–244 (EKPIEAKNEI) show a composition bias toward basic and acidic residues. Polar residues-rich tracts occupy residues 263–279 (SDKN…SDQQ) and 307–328 (PAQS…SLTL).

This is an uncharacterized protein from Saccharomyces cerevisiae (strain ATCC 204508 / S288c) (Baker's yeast).